A 942-amino-acid chain; its full sequence is Chitin synthase 2 (942 aa).

A compositionally biased stretch (basic and acidic residues) spans 1 to 13; sequence MAYHYSHDSDRRQ. Residues 1–132 are disordered; the sequence is MAYHYSHDSD…PSHTDYSDED (132 aa). Positions 18 to 33 are enriched in low complexity; it reads YNYPSNYSNPSQYSIP. The N-linked (GlcNAc...) asparagine glycan is linked to asparagine 23. Polar residues predominate over residues 71 to 80; the sequence is PQPTASSMTS. N-linked (GlcNAc...) asparagine glycosylation is present at asparagine 587. Helical transmembrane passes span 590–610, 625–645, 663–683, and 696–716; these read IFAATYAMVCFWRIWTSGHGI, FNLLFNWLSVSSFYLAFFFLI, IFQVFNKVYIALIFVVLVCSL, and FCIFMFAVCQGILLYCAGWTV. A glycan (N-linked (GlcNAc...) asparagine) is linked at asparagine 736. A run of 2 helical transmembrane segments spans residues 739–759 and 770–790; these read FVQLALSLMATYGLYLISSLL and FVQYLLLLPSYVNILLIYAMC. An N-linked (GlcNAc...) asparagine glycan is attached at asparagine 803. The next 2 helical transmembrane spans lie at 873 to 893 and 916 to 936; these read VVLLFLGSNMLIILLFTSSTF and IFYAVLGLSALRFAGCLLYLI.

This sequence belongs to the chitin synthase family. Class III subfamily.

It localises to the cell membrane. It carries out the reaction [(1-&gt;4)-N-acetyl-beta-D-glucosaminyl](n) + UDP-N-acetyl-alpha-D-glucosamine = [(1-&gt;4)-N-acetyl-beta-D-glucosaminyl](n+1) + UDP + H(+). Functionally, polymerizes chitin, a structural polymer of the cell wall and septum, by transferring the sugar moiety of UDP-GlcNAc to the non-reducing end of the growing chitin polymer. This Cryptococcus neoformans var. grubii serotype A (strain H99 / ATCC 208821 / CBS 10515 / FGSC 9487) (Filobasidiella neoformans var. grubii) protein is Chitin synthase 2.